A 380-amino-acid chain; its full sequence is Beta sliding clamp (380 aa).

This sequence belongs to the beta sliding clamp family. As to quaternary structure, forms a ring-shaped head-to-tail homodimer around DNA which binds and tethers DNA polymerases and other proteins to the DNA. The DNA replisome complex has a single clamp-loading complex (3 tau and 1 each of delta, delta', psi and chi subunits) which binds 3 Pol III cores (1 core on the leading strand and 2 on the lagging strand) each with a beta sliding clamp dimer. Additional proteins in the replisome are other copies of gamma, psi and chi, Ssb, DNA helicase and RNA primase.

The protein localises to the cytoplasm. Its function is as follows. Confers DNA tethering and processivity to DNA polymerases and other proteins. Acts as a clamp, forming a ring around DNA (a reaction catalyzed by the clamp-loading complex) which diffuses in an ATP-independent manner freely and bidirectionally along dsDNA. Initially characterized for its ability to contact the catalytic subunit of DNA polymerase III (Pol III), a complex, multichain enzyme responsible for most of the replicative synthesis in bacteria; Pol III exhibits 3'-5' exonuclease proofreading activity. The beta chain is required for initiation of replication as well as for processivity of DNA replication. In Lactococcus lactis subsp. lactis (strain IL1403) (Streptococcus lactis), this protein is Beta sliding clamp (dnaN).